Reading from the N-terminus, the 390-residue chain is Chorismate synthase 1 (390 aa).

Arg-39 and Arg-45 together coordinate NADP(+). FMN is bound by residues 132–134 (RSS), 253–254 (NA), Gly-298, 313–317 (KPIPT), and Arg-339.

The protein belongs to the chorismate synthase family. In terms of assembly, homotetramer. It depends on FMNH2 as a cofactor.

It carries out the reaction 5-O-(1-carboxyvinyl)-3-phosphoshikimate = chorismate + phosphate. It functions in the pathway metabolic intermediate biosynthesis; chorismate biosynthesis; chorismate from D-erythrose 4-phosphate and phosphoenolpyruvate: step 7/7. Its function is as follows. Catalyzes the anti-1,4-elimination of the C-3 phosphate and the C-6 proR hydrogen from 5-enolpyruvylshikimate-3-phosphate (EPSP) to yield chorismate, which is the branch point compound that serves as the starting substrate for the three terminal pathways of aromatic amino acid biosynthesis. This reaction introduces a second double bond into the aromatic ring system. The sequence is that of Chorismate synthase 1 from Bacillus anthracis.